The sequence spans 88 residues: Putative membrane protein insertion efficiency factor (88 aa).

The segment at 64–88 is disordered; the sequence is GVDPVPKKSSSKKTSSTTACGCGHS.

The protein belongs to the UPF0161 family.

It localises to the cell inner membrane. Could be involved in insertion of integral membrane proteins into the membrane. This is Putative membrane protein insertion efficiency factor from Herminiimonas arsenicoxydans.